The chain runs to 502 residues: 2,3-bisphosphoglycerate-independent phosphoglycerate mutase (502 aa).

Mn(2+) contacts are provided by Asp-12 and Ser-62. Residue Ser-62 is the Phosphoserine intermediate of the active site. Residues His-123, 152-153, Arg-183, Arg-189, 255-258, and Lys-329 each bind substrate; these read RD and RPDR. Asp-394, His-398, Asp-435, His-436, and His-453 together coordinate Mn(2+).

Belongs to the BPG-independent phosphoglycerate mutase family. Monomer. Mn(2+) is required as a cofactor.

The enzyme catalyses (2R)-2-phosphoglycerate = (2R)-3-phosphoglycerate. Its pathway is carbohydrate degradation; glycolysis; pyruvate from D-glyceraldehyde 3-phosphate: step 3/5. Catalyzes the interconversion of 2-phosphoglycerate and 3-phosphoglycerate. In Malacoplasma penetrans (strain HF-2) (Mycoplasma penetrans), this protein is 2,3-bisphosphoglycerate-independent phosphoglycerate mutase.